The sequence spans 392 residues: SH3 domain-binding protein 5-like (392 aa).

Positions 1-57 are disordered; sequence MADLKKAAGGRETPQGELRSEVVEDEGPRSPVAEEPGGSGSNSSETKLSPREEEELD. T13 is subject to Phosphothreonine. Positions 18–28 are enriched in basic and acidic residues; sequence LRSEVVEDEGP. Phosphoserine occurs at positions 30 and 49. Coiled coils occupy residues 59–140 and 169–272; these read RIQE…YERA and WQEM…EQIH. The tract at residues 275–332 is disordered; sequence RRGLPPHPLGPRRSSPVGAEAGPEGIEDGDSGIEGAEGGGLEEGSSLGPGPGPDTDTL. Positions 317–332 are enriched in low complexity; sequence EGSSLGPGPGPDTDTL. S342, S349, S357, S361, and S377 each carry phosphoserine. The interval 364–392 is disordered; it reads GQELGAQSRGRRGSDIGVRGGRHQRSVSL. The span at 383–392 shows a compositional bias: basic residues; it reads GGRHQRSVSL.

The protein belongs to the SH3BP5 family.

In terms of biological role, functions as a guanine nucleotide exchange factor (GEF) for RAB11A. This is SH3 domain-binding protein 5-like (Sh3bp5l) from Mus musculus (Mouse).